Reading from the N-terminus, the 559-residue chain is Phosphatase and actin regulator 3 (559 aa).

The interval 1-65 is disordered; sequence MAASEDGSGC…GIRTPPVRRN (65 aa). Over residues 15-24 the composition is skewed to polar residues; sequence GRSQSDPSVL. Residues 25–35 show a composition bias toward low complexity; that stretch reads TDSSATSSADA. Threonine 70 is modified (phosphothreonine). Positions 82–342 are disordered; it reads KKKNEKLKQT…VERGKEREEA (261 aa). Residues 93 to 118 form an RPEL 1 repeat; sequence SALEKKMAGRQGREELIKKGLLEMME. The segment covering 95–113 has biased composition (basic and acidic residues); sequence LEKKMAGRQGREELIKKGL. Over residues 134–151 the composition is skewed to polar residues; that stretch reads SVQSEPPTPKSETLTSED. Pro residues predominate over residues 229–240; sequence PSPPLLPTPPPK. Serine 230 carries the post-translational modification Phosphoserine. Position 236 is a phosphothreonine (threonine 236). Composition is skewed to polar residues over residues 248-262 and 270-281; these read NVTG…SSMK and GQLSTPTGSPHL. Residues 293–342 show a composition bias toward basic and acidic residues; that stretch reads VIEELHRALATKHRQDSFQGRESKGSPKKRLDVRLSRTSSVERGKEREEA. The stretch at 346 to 369 forms a coiled coil; sequence DGALENKRTAAKESEENKENLIIN. RPEL repeat units follow at residues 401–426, 439–464, and 477–502; these read ELLA…PRRT, MKLS…KQRN, and QRLT…IRFS. Positions 438–518 are required for PP1CA binding and inhibition of PP1 activity; sequence EMKLSKRLSQ…KAQDYDRRAD (81 aa). A coiled-coil region spans residues 450-486; it reads AVEELERRNILKQRNDQTEQEERREIKQRLTRKLNQR.

Belongs to the phosphatase and actin regulator family. Binds actin and PPP1CA; thus inhibiting the protein phosphatase 1 (PP1) activity. Abundantly expressed in brain. Also found in several tumors such as lung carcinomas, nervous tumors and HL-60 leukemia cells. Isoform 3 is the major form in U-937, GOTO and HL-60 leukemia cells.

Its subcellular location is the nucleus matrix. The protein is Phosphatase and actin regulator 3 (PHACTR3) of Homo sapiens (Human).